The primary structure comprises 288 residues: Co-chaperone protein DjlA (288 aa).

Over 1-6 (MEFIGK) the chain is Periplasmic. The chain crosses the membrane as a helical span at residues 7–30 (IIGVFLGWKVGGFFGAIAGLILGS). The Cytoplasmic portion of the chain corresponds to 31–288 (IADKKLYELG…DLICKAKGWK (258 aa)). The 67-residue stretch at 222–288 (DAYKVLGVTE…DLICKAKGWK (67 aa)) folds into the J domain.

As to quaternary structure, homodimer.

Its subcellular location is the cell inner membrane. Regulatory DnaK co-chaperone. Direct interaction between DnaK and DjlA is needed for the induction of the wcaABCDE operon, involved in the synthesis of a colanic acid polysaccharide capsule, possibly through activation of the RcsB/RcsC phosphotransfer signaling pathway. The colanic acid capsule may help the bacterium survive conditions outside the host. This is Co-chaperone protein DjlA from Haemophilus influenzae (strain ATCC 51907 / DSM 11121 / KW20 / Rd).